Reading from the N-terminus, the 567-residue chain is TGF-beta receptor type-2 (567 aa).

The N-terminal stretch at 1 to 23 (MGRGLLRGLWPLHIVLWTRIAST) is a signal peptide. The Extracellular portion of the chain corresponds to 24–166 (IPPHVPKSVN…SPDLLLVIIQ (143 aa)). Disulfide bonds link cysteine 51/cysteine 84, cysteine 54/cysteine 71, cysteine 61/cysteine 67, cysteine 77/cysteine 101, cysteine 121/cysteine 136, and cysteine 138/cysteine 143. N-linked (GlcNAc...) asparagine glycans are attached at residues asparagine 70 and asparagine 94. A helical transmembrane segment spans residues 167–187 (VTGVSLLPPLGIAIAVIAIFY). The Cytoplasmic portion of the chain corresponds to 188–567 (CYRVHRQQKL…PEDGSLNTTK (380 aa)). Residues 244 to 546 (IELDTLVGKG…RFSELEHPDR (303 aa)) enclose the Protein kinase domain. Residues 250–258 (VGKGRFAEV) and lysine 277 each bind ATP. The active-site Proton acceptor is aspartate 379. Residues serine 409, serine 548, and serine 553 each carry the phosphoserine modification. A disordered region spans residues 546–567 (RLSGRSCSQEKIPEDGSLNTTK).

The protein belongs to the protein kinase superfamily. TKL Ser/Thr protein kinase family. TGFB receptor subfamily. Homodimer. Heterohexamer; TGFB1, TGFB2 and TGFB3 homodimeric ligands assemble a functional receptor composed of two TGFBR1 and TGFBR2 heterodimers to form a ligand-receptor heterohexamer. The respective affinity of TGFRB1 and TGFRB2 for the ligands may modulate the kinetics of assembly of the receptor and may explain the different biological activities of TGFB1, TGFB2 and TGFB3. Component of a complex composed of TSC22D1 (via N-terminus), TGFBR1 and TGFBR2; the interaction between TSC22D1 and TGFBR1 is inhibited by SMAD7 and promoted by TGFB1. Interacts with DAXX. Interacts with DYNLT4. Interacts with ZFYVE9; ZFYVE9 recruits SMAD2 and SMAD3 to the TGF-beta receptor. Interacts with and is activated by SCUBE3; this interaction does not affect TGFB1-binding to TGFBR2. Interacts with VPS39; this interaction is independent of the receptor kinase activity and of the presence of TGF-beta. Interacts with CLU. The cofactor is Mg(2+). Requires Mn(2+) as cofactor. In terms of processing, phosphorylated on a Ser/Thr residue in the cytoplasmic domain.

It localises to the cell membrane. The protein localises to the membrane raft. The enzyme catalyses L-threonyl-[receptor-protein] + ATP = O-phospho-L-threonyl-[receptor-protein] + ADP + H(+). The catalysed reaction is L-seryl-[receptor-protein] + ATP = O-phospho-L-seryl-[receptor-protein] + ADP + H(+). Its function is as follows. Transmembrane serine/threonine kinase forming with the TGF-beta type I serine/threonine kinase receptor, TGFBR1, the non-promiscuous receptor for the TGF-beta cytokines TGFB1, TGFB2 and TGFB3. Transduces the TGFB1, TGFB2 and TGFB3 signal from the cell surface to the cytoplasm and is thus regulating a plethora of physiological and pathological processes including cell cycle arrest in epithelial and hematopoietic cells, control of mesenchymal cell proliferation and differentiation, wound healing, extracellular matrix production, immunosuppression and carcinogenesis. The formation of the receptor complex composed of 2 TGFBR1 and 2 TGFBR2 molecules symmetrically bound to the cytokine dimer results in the phosphorylation and the activation of TGFRB1 by the constitutively active TGFBR2. Activated TGFBR1 phosphorylates SMAD2 which dissociates from the receptor and interacts with SMAD4. The SMAD2-SMAD4 complex is subsequently translocated to the nucleus where it modulates the transcription of the TGF-beta-regulated genes. This constitutes the canonical SMAD-dependent TGF-beta signaling cascade. Also involved in non-canonical, SMAD-independent TGF-beta signaling pathways. This chain is TGF-beta receptor type-2 (Tgfbr2), found in Rattus norvegicus (Rat).